The chain runs to 180 residues: UPF0227 protein YcfP (180 aa).

It belongs to the UPF0227 family.

The polypeptide is UPF0227 protein YcfP (Escherichia coli O9:H4 (strain HS)).